Here is a 143-residue protein sequence, read N- to C-terminus: Large ribosomal subunit protein uL11 (143 aa).

Belongs to the universal ribosomal protein uL11 family. As to quaternary structure, part of the ribosomal stalk of the 50S ribosomal subunit. Interacts with L10 and the large rRNA to form the base of the stalk. L10 forms an elongated spine to which L12 dimers bind in a sequential fashion forming a multimeric L10(L12)X complex. One or more lysine residues are methylated.

Functionally, forms part of the ribosomal stalk which helps the ribosome interact with GTP-bound translation factors. The polypeptide is Large ribosomal subunit protein uL11 (Alkalilimnicola ehrlichii (strain ATCC BAA-1101 / DSM 17681 / MLHE-1)).